Reading from the N-terminus, the 345-residue chain is Phosphoribosylformylglycinamidine cyclo-ligase (345 aa).

This sequence belongs to the AIR synthase family.

The protein resides in the cytoplasm. It carries out the reaction 2-formamido-N(1)-(5-O-phospho-beta-D-ribosyl)acetamidine + ATP = 5-amino-1-(5-phospho-beta-D-ribosyl)imidazole + ADP + phosphate + H(+). It functions in the pathway purine metabolism; IMP biosynthesis via de novo pathway; 5-amino-1-(5-phospho-D-ribosyl)imidazole from N(2)-formyl-N(1)-(5-phospho-D-ribosyl)glycinamide: step 2/2. This is Phosphoribosylformylglycinamidine cyclo-ligase from Ligilactobacillus salivarius (strain UCC118) (Lactobacillus salivarius).